Here is a 96-residue protein sequence, read N- to C-terminus: Colicin-K immunity protein (96 aa).

A helical membrane pass occupies residues 73-93 (ALFYLLMAIPVGLPSFIYYTL).

The protein resides in the cell membrane. Its function is as follows. This protein is able to protect a cell, which harbors the plasmid ColK encoding colicin K, against colicin K. The sequence is that of Colicin-K immunity protein (cki) from Escherichia coli.